The primary structure comprises 236 residues: Ribose-5-phosphate isomerase A (236 aa).

Substrate contacts are provided by residues 33–36, 90–93, and 103–106; these read TGST, DGAD, and KGGG. Glu-112 serves as the catalytic Proton acceptor. Lys-130 contributes to the substrate binding site.

It belongs to the ribose 5-phosphate isomerase family. Homodimer.

It carries out the reaction aldehydo-D-ribose 5-phosphate = D-ribulose 5-phosphate. It participates in carbohydrate degradation; pentose phosphate pathway; D-ribose 5-phosphate from D-ribulose 5-phosphate (non-oxidative stage): step 1/1. Its function is as follows. Catalyzes the reversible conversion of ribose-5-phosphate to ribulose 5-phosphate. The chain is Ribose-5-phosphate isomerase A from Nostoc sp. (strain PCC 7120 / SAG 25.82 / UTEX 2576).